A 285-amino-acid chain; its full sequence is MKEREEIVNSDILEEFATYLELEGKSKNTIRMYTYYLSKFFEEGYSPTARDALKFLAKLRKSGYSIRSLNLVIQALKSYFKFEGLDSEAEKLKNPKIPKSLPKSLTEDEVKKIVSVADNLRDKLILLLLYGAGLRVSELCNLKIEDVNFEKSFLIVRGGKGGKDRVIPISKTLLFEIERYLKTRKDNSPYLFVEKRRNRKDKLSPKTVWMLVKKYGKKVGLNVTPHQLRHSFATHMLERGVDIRIIQELLGHANLSTTQIYTKVTTKHLREAIEKAKLIETILGG.

Residues 7 to 84 (IVNSDILEEF…ALKSYFKFEG (78 aa)) form the Core-binding (CB) domain. Residues 100–274 (SLPKSLTEDE…TTKHLREAIE (175 aa)) form the Tyr recombinase domain. Catalysis depends on residues R135, K160, H226, R229, and H252. Residue Y261 is the O-(3'-phospho-DNA)-tyrosine intermediate of the active site.

This sequence belongs to the 'phage' integrase family. XerA subfamily.

Its subcellular location is the cytoplasm. Site-specific tyrosine recombinase, which acts by catalyzing the cutting and rejoining of the recombining DNA molecules. This is Tyrosine recombinase XerA from Pyrococcus horikoshii (strain ATCC 700860 / DSM 12428 / JCM 9974 / NBRC 100139 / OT-3).